A 142-amino-acid chain; its full sequence is Peptide methionine sulfoxide reductase MsrB (142 aa).

Positions 3-126 (KEELKKKLSP…NSAALRFIPF (124 aa)) constitute a MsrB domain. Catalysis depends on Cys115, which acts as the Nucleophile.

Belongs to the MsrB Met sulfoxide reductase family.

The catalysed reaction is L-methionyl-[protein] + [thioredoxin]-disulfide + H2O = L-methionyl-(R)-S-oxide-[protein] + [thioredoxin]-dithiol. This chain is Peptide methionine sulfoxide reductase MsrB, found in Lactococcus lactis subsp. cremoris (strain SK11).